A 391-amino-acid polypeptide reads, in one-letter code: Ferrochelatase (391 aa).

Fe cation-binding residues include His-196 and Glu-281.

It belongs to the ferrochelatase family.

It is found in the cytoplasm. The enzyme catalyses heme b + 2 H(+) = protoporphyrin IX + Fe(2+). It participates in porphyrin-containing compound metabolism; protoheme biosynthesis; protoheme from protoporphyrin-IX: step 1/1. Functionally, catalyzes the ferrous insertion into protoporphyrin IX. The sequence is that of Ferrochelatase from Prochlorococcus marinus (strain NATL1A).